Consider the following 302-residue polypeptide: Glutaminase (302 aa).

Substrate is bound by residues S61, N111, E155, N162, Y186, Y238, and V256.

This sequence belongs to the glutaminase family. In terms of assembly, homotetramer.

The catalysed reaction is L-glutamine + H2O = L-glutamate + NH4(+). The chain is Glutaminase from Pseudomonas syringae pv. tomato (strain ATCC BAA-871 / DC3000).